A 524-amino-acid chain; its full sequence is Na(+)/H(+) antiporter NhaB (524 aa).

Helical transmembrane passes span 13 to 33 (FLGNSPDWYKLAIMGFLIINP), 98 to 118 (LLLVFMVAGIYFMKQLLLFVF), 140 to 160 (AFLSAFLDALTVIAVVISVSV), 239 to 259 (FFIRMLPVTLPVFIFGLLVCL), 304 to 324 (AIIGVWLVLALALHLAEVGLV), 325 to 345 (GLSVIILATSFCGITNEHSLG), 358 to 378 (LTVFFAVVAVIIEQSLFTPII), 448 to 468 (ATPNGQAAFLFLLTSALAPLI), and 479 to 499 (ALPYTLVMTIVGLLGVEFLLV).

This sequence belongs to the NhaB Na(+)/H(+) (TC 2.A.34) antiporter family.

Its subcellular location is the cell inner membrane. It catalyses the reaction 2 Na(+)(in) + 3 H(+)(out) = 2 Na(+)(out) + 3 H(+)(in). Its function is as follows. Na(+)/H(+) antiporter that extrudes sodium in exchange for external protons. This chain is Na(+)/H(+) antiporter NhaB, found in Yersinia pseudotuberculosis serotype I (strain IP32953).